Consider the following 211-residue polypeptide: Probable cobalt-precorrin-7 C(5)-methyltransferase (211 aa).

Belongs to the precorrin methyltransferase family.

The catalysed reaction is Co-precorrin-7 + S-adenosyl-L-methionine = Co-precorrin-8X + S-adenosyl-L-homocysteine + H(+). Its pathway is cofactor biosynthesis; adenosylcobalamin biosynthesis; cob(II)yrinate a,c-diamide from sirohydrochlorin (anaerobic route): step 8/10. In terms of biological role, catalyzes the methylation of C-5 in cobalt-precorrin-7 to form cobalt-precorrin-8. The chain is Probable cobalt-precorrin-7 C(5)-methyltransferase (cbiE) from Methanocaldococcus jannaschii (strain ATCC 43067 / DSM 2661 / JAL-1 / JCM 10045 / NBRC 100440) (Methanococcus jannaschii).